A 325-amino-acid chain; its full sequence is Putative [LysW]-lysine/[LysW]-ornithine hydrolase (325 aa).

His-66 is a binding site for Zn(2+). Asp-68 is a catalytic residue. Asp-90 is a binding site for Zn(2+). Residue Glu-117 is the Proton acceptor of the active site. Zn(2+) contacts are provided by Glu-118, Glu-139, and His-297.

It belongs to the peptidase M20A family. LysK subfamily. Requires Zn(2+) as cofactor. Co(2+) is required as a cofactor.

It is found in the cytoplasm. The enzyme catalyses [amino-group carrier protein]-C-terminal-gamma-(L-lysyl)-L-glutamate + H2O = [amino-group carrier protein]-C-terminal-L-glutamate + L-lysine. The catalysed reaction is [amino-group carrier protein]-C-terminal-gamma-(L-ornithyl)-L-glutamate + H2O = [amino-group carrier protein]-C-terminal-L-glutamate + L-ornithine. It participates in amino-acid biosynthesis; L-lysine biosynthesis via AAA pathway; L-lysine from L-alpha-aminoadipate (Thermus route): step 5/5. The protein operates within amino-acid biosynthesis; L-arginine biosynthesis. Catalyzes the release of L-lysine from [LysW]-gamma-L-lysine and the release of L-ornithine from [LysW]-L-ornithine. This chain is Putative [LysW]-lysine/[LysW]-ornithine hydrolase, found in Pyrococcus horikoshii (strain ATCC 700860 / DSM 12428 / JCM 9974 / NBRC 100139 / OT-3).